Reading from the N-terminus, the 194-residue chain is Flagellar transcriptional regulator FlhC (194 aa).

Residues Cys139, Cys142, Cys159, and Cys162 each contribute to the Zn(2+) site.

This sequence belongs to the FlhC family. Heterohexamer composed of two FlhC and four FlhD subunits. Each FlhC binds a FlhD dimer, forming a heterotrimer, and a hexamer assembles by dimerization of two heterotrimers. It depends on Zn(2+) as a cofactor.

It is found in the cytoplasm. In terms of biological role, functions in complex with FlhD as a master transcriptional regulator that regulates transcription of several flagellar and non-flagellar operons by binding to their promoter region. Activates expression of class 2 flagellar genes, including fliA, which is a flagellum-specific sigma factor that turns on the class 3 genes. Also regulates genes whose products function in a variety of physiological pathways. This chain is Flagellar transcriptional regulator FlhC, found in Xenorhabdus nematophila (Achromobacter nematophilus).